Reading from the N-terminus, the 272-residue chain is 3-hydroxyanthranilate 3,4-dioxygenase (272 aa).

Residues 1 to 154 (MMEWIDENSS…SEEHKTGKPS (154 aa)) are domain A (catalytic). Arginine 38 is a binding site for O2. Residues histidine 42, glutamate 48, and histidine 86 each coordinate Fe cation. Glutamate 48 contacts substrate. Substrate-binding residues include arginine 90 and glutamate 100. Positions 155–169 (KESSCSINVDTETEL) are linker. A domain B region spans residues 170 to 272 (MEPFPLKQWL…SITVDSLANK (103 aa)).

It belongs to the 3-HAO family. Requires Fe(2+) as cofactor.

Its subcellular location is the cytoplasm. It catalyses the reaction 3-hydroxyanthranilate + O2 = (2Z,4Z)-2-amino-3-carboxymuconate 6-semialdehyde. It participates in cofactor biosynthesis; NAD(+) biosynthesis; quinolinate from L-kynurenine: step 3/3. Its function is as follows. Catalyzes the oxidative ring opening of 3-hydroxyanthranilate to 2-amino-3-carboxymuconate semialdehyde, which spontaneously cyclizes to quinolinate. This is 3-hydroxyanthranilate 3,4-dioxygenase from Nematostella vectensis (Starlet sea anemone).